The chain runs to 782 residues: Probable cyclic di-GMP phosphodiesterase PdeI (782 aa).

2 helical membrane-spanning segments follow: residues 12–32 and 286–306; these read LIIL…IINY and LFYL…LMTT. The EAL domain occupies 527–781; sequence NIWIARNIRH…AWDKSGKLVK (255 aa).

It localises to the cell membrane. It carries out the reaction 3',3'-c-di-GMP + H2O = 5'-phosphoguanylyl(3'-&gt;5')guanosine + H(+). In terms of biological role, phosphodiesterase (PDE) that catalyzes the hydrolysis of cyclic-di-GMP (c-di-GMP) to 5'-pGpG. Overexpression reduces biofilm formation. Cyclic-di-GMP is a second messenger which controls cell surface-associated traits in bacteria. This Escherichia coli (strain K12) protein is Probable cyclic di-GMP phosphodiesterase PdeI.